A 477-amino-acid polypeptide reads, in one-letter code: Maternal protein exuperantia-2 (477 aa).

A compositionally biased stretch (basic and acidic residues) spans 196–209; that stretch reads KDGNSTKEDEHENP. Disordered stretches follow at residues 196 to 226 and 384 to 477; these read KDGN…NQKQ and TIKP…FADI. Over residues 385–402 the composition is skewed to basic residues; the sequence is IKPRCKRSGNGTRRRNRA.

In terms of biological role, ensures the proper localization of the mRNA of the bicoid gene to the anterior regions of the oocyte thus playing a fundamental role in the establishment of the polarity of the oocyte. May bind the bcd mRNA. In Drosophila pseudoobscura pseudoobscura (Fruit fly), this protein is Maternal protein exuperantia-2 (exu2).